The chain runs to 430 residues: Glutamate-1-semialdehyde 2,1-aminomutase (430 aa).

At K267 the chain carries N6-(pyridoxal phosphate)lysine.

This sequence belongs to the class-III pyridoxal-phosphate-dependent aminotransferase family. HemL subfamily. Homodimer. Requires pyridoxal 5'-phosphate as cofactor.

The protein resides in the cytoplasm. The enzyme catalyses (S)-4-amino-5-oxopentanoate = 5-aminolevulinate. Its pathway is porphyrin-containing compound metabolism; protoporphyrin-IX biosynthesis; 5-aminolevulinate from L-glutamyl-tRNA(Glu): step 2/2. The protein is Glutamate-1-semialdehyde 2,1-aminomutase of Natranaerobius thermophilus (strain ATCC BAA-1301 / DSM 18059 / JW/NM-WN-LF).